The primary structure comprises 282 residues: Protein-export membrane protein SecF (282 aa).

The next 6 membrane-spanning stretches (helical) occupy residues 9–29, 120–140, 149–169, 174–194, 214–234, and 236–256; these read IAIPIALLILSILLIGFKGIP, EGFKAVGFAFMFMAIVVYLYF, IILSALSDIIMALGAMSLLGI, ATIAALLMVIGYSVDSDILLT, KTGLTMTLTTITAMLILLIVV, and LFIPVADILANIATVLILALI.

This sequence belongs to the SecD/SecF family. SecF subfamily. Part of the protein translocation apparatus. Forms a complex with SecD.

It is found in the cell membrane. In terms of biological role, involved in protein export. The protein is Protein-export membrane protein SecF of Methanocaldococcus jannaschii (strain ATCC 43067 / DSM 2661 / JAL-1 / JCM 10045 / NBRC 100440) (Methanococcus jannaschii).